Consider the following 67-residue polypeptide: Protein AaeX (67 aa).

The next 2 helical transmembrane spans lie at 10 to 30 and 43 to 63; these read FGLS…LFFV and FVWH…YLLF.

It belongs to the AaeX family.

It is found in the cell membrane. This is Protein AaeX from Pectobacterium atrosepticum (strain SCRI 1043 / ATCC BAA-672) (Erwinia carotovora subsp. atroseptica).